A 543-amino-acid chain; its full sequence is Hydroxylamine reductase (543 aa).

[4Fe-4S] cluster-binding residues include C3, C6, C15, and C21. H239, E263, C307, C398, C426, C451, E486, and K488 together coordinate hybrid [4Fe-2O-2S] cluster. The residue at position 398 (C398) is a Cysteine persulfide.

This sequence belongs to the HCP family. [4Fe-4S] cluster serves as cofactor. It depends on hybrid [4Fe-2O-2S] cluster as a cofactor.

The protein localises to the cytoplasm. The enzyme catalyses A + NH4(+) + H2O = hydroxylamine + AH2 + H(+). Catalyzes the reduction of hydroxylamine to form NH(3) and H(2)O. The chain is Hydroxylamine reductase from Methanococcus vannielii (strain ATCC 35089 / DSM 1224 / JCM 13029 / OCM 148 / SB).